The following is a 463-amino-acid chain: Putative pentatricopeptide repeat-containing protein At4g17915 (463 aa).

PPR repeat units follow at residues 12-46 (STRLLNICVDSLCKFRKLEKAESLIIDGIRLGVDP), 47-81 (DVVTYNTLISGYCRFVGIEEAYAVTRRMRDAGIRP), 82-116 (DVATYNSLIAGAARRLMLDHVLYLFDEMLEWGIYP), 117-152 (DLWSYNTLMCCYFKLGKHEEAFRVLYKDLQLAGLNP), 153-186 (GPDTYNVLLDALCKCGYIDNALELFKEMQSRFKP), 187-221 (ELMTYNILINGLCKSRRVGTAKWMLTELKKSGYTP), 222-256 (NAVTYTTILKLYFKTRRIRRGLQLFLEMKREGYTY), 257-291 (DGYAYFAVVSALIKTGRTKEAYEYMQELVRKGRRH), 292-326 (DIVSYNTLLNLYFKDGNLDAVDDLLGEIERRGMKA), 327-361 (DEYTHTIIVNGLLRTGQTRRAEEHFVSMGEMGIGL), 362-392 (NLVTCNCLVDGLCKAGHVDRAMRYFESMEVK), and 393-427 (DEYTYTSVVHNLCKDMRFVCASKLLLSCYNKGIKI).

This sequence belongs to the PPR family. P subfamily.

The sequence is that of Putative pentatricopeptide repeat-containing protein At4g17915 from Arabidopsis thaliana (Mouse-ear cress).